The following is a 276-amino-acid chain: Octanoyltransferase LipM (276 aa).

The BPL/LPL catalytic domain maps to 32 to 247 (GEVAPTLRFY…GFEDALQLTF (216 aa)). Cysteine 149 serves as the catalytic Acyl-thioester intermediate.

This sequence belongs to the octanoyltransferase LipM family. As to quaternary structure, monomer.

It carries out the reaction octanoyl-[ACP] + L-lysyl-[protein] = N(6)-octanoyl-L-lysyl-[protein] + holo-[ACP] + H(+). The protein operates within protein modification; protein lipoylation via endogenous pathway; protein N(6)-(lipoyl)lysine from octanoyl-[acyl-carrier-protein]. Its function is as follows. Catalyzes the transfer of endogenously produced octanoic acid from octanoyl-acyl-carrier-protein onto the lipoyl domain of GcvH, an intermediate carrier during protein lipoylation. This Exiguobacterium sibiricum (strain DSM 17290 / CCUG 55495 / CIP 109462 / JCM 13490 / 255-15) protein is Octanoyltransferase LipM.